The sequence spans 316 residues: Annexin D5 (316 aa).

Residue A2 is modified to N-acetylalanine. Annexin repeat units lie at residues 11–82 (PSPR…LWMP), 83–154 (EAVE…AYLN), 166–238 (ASVE…TILQ), and 242–313 (NSCF…SLLG). Residues F24, G26, G28, and E68 each coordinate Ca(2+). Position 95 is a phosphoserine (S95). T112 is subject to Phosphothreonine. Ca(2+) is bound at residue G259. Position 284 is a phosphotyrosine (Y284). Ca(2+) is bound by residues D299 and T300.

The protein belongs to the annexin (TC 1.A.31.1) family. As to expression, expressed mainly in roots and flowers. Lower in stems and leaves.

The chain is Annexin D5 (ANN5) from Arabidopsis thaliana (Mouse-ear cress).